A 504-amino-acid chain; its full sequence is Peroxisomal catalase (504 aa).

Residues His-63 and Asn-136 contribute to the active site. Position 345 (Tyr-345) interacts with heme. The Microbody targeting signal signature appears at Asn-502–Phe-504.

This sequence belongs to the catalase family. Requires heme as cofactor.

Its subcellular location is the peroxisome matrix. It catalyses the reaction 2 H2O2 = O2 + 2 H2O. Its function is as follows. Catalyzes the degradation of hydrogen peroxide (H(2)O(2)) generated by peroxisomal oxidases to water and oxygen, thereby protecting cells from the toxic effects of hydrogen peroxide. In Candida boidinii (Yeast), this protein is Peroxisomal catalase (CTA1).